Consider the following 880-residue polypeptide: Valine--tRNA ligase (880 aa).

The short motif at 49-59 (PNVTGKLHLGH) is the 'HIGH' region element. The 'KMSKS' region motif lies at 525-529 (KMSKS). Residue lysine 528 coordinates ATP. A coiled-coil region spans residues 809–880 (LEGLINIEEE…VKARLAELKR (72 aa)).

This sequence belongs to the class-I aminoacyl-tRNA synthetase family. ValS type 1 subfamily. Monomer.

The protein localises to the cytoplasm. The enzyme catalyses tRNA(Val) + L-valine + ATP = L-valyl-tRNA(Val) + AMP + diphosphate. Its function is as follows. Catalyzes the attachment of valine to tRNA(Val). As ValRS can inadvertently accommodate and process structurally similar amino acids such as threonine, to avoid such errors, it has a 'posttransfer' editing activity that hydrolyzes mischarged Thr-tRNA(Val) in a tRNA-dependent manner. In Geobacillus kaustophilus (strain HTA426), this protein is Valine--tRNA ligase.